The primary structure comprises 788 residues: Protein FAR1-RELATED SEQUENCE 5 (788 aa).

The FAR1 domain maps to 87 to 179 (AFYNSYARRI…VKDHNHELVP (93 aa)). The MULE domain occupies 299-395 (TVTFDTTYRS…CKWHILKKCQ (97 aa)). Residues 584-616 (FNVLEMRANCSCQMFEFSGIICRHILAVFRVTN) form an SWIM-type zinc finger. A disordered region spans residues 713-733 (SSVTGGKHQQEVLAQPEPEDE). Positions 731 to 768 (EDEMDKKINQLRNELELANRKCEAYRTNLLSVLKEMED) form a coiled coil.

Belongs to the FHY3/FAR1 family. Expressed in hypocotyls, rosette and cauline leaves, inflorescences stems, flowers and siliques.

It is found in the nucleus. In terms of biological role, putative transcription activator involved in regulating light control of development. This is Protein FAR1-RELATED SEQUENCE 5 (FRS5) from Arabidopsis thaliana (Mouse-ear cress).